The chain runs to 308 residues: Ribosomal RNA large subunit methyltransferase F (308 aa).

It belongs to the methyltransferase superfamily. METTL16/RlmF family.

The protein resides in the cytoplasm. The enzyme catalyses adenosine(1618) in 23S rRNA + S-adenosyl-L-methionine = N(6)-methyladenosine(1618) in 23S rRNA + S-adenosyl-L-homocysteine + H(+). Functionally, specifically methylates the adenine in position 1618 of 23S rRNA. This is Ribosomal RNA large subunit methyltransferase F from Escherichia coli O127:H6 (strain E2348/69 / EPEC).